The sequence spans 138 residues: Putative transcriptional regulatory protein NedR (138 aa).

Residues 1–25 (MCWGRSWTFGRSSSKGWRPTSSASS) are disordered. Polar residues predominate over residues 9 to 25 (FGRSSSKGWRPTSSASS).

May serve as a transcriptional regulator. This chain is Putative transcriptional regulatory protein NedR (nedR), found in Micromonospora viridifaciens.